Here is a 414-residue protein sequence, read N- to C-terminus: Serine hydroxymethyltransferase (414 aa).

(6S)-5,6,7,8-tetrahydrofolate-binding positions include leucine 116 and 120–122; that span reads GHL. An N6-(pyridoxal phosphate)lysine modification is found at lysine 224. 348–350 provides a ligand contact to (6S)-5,6,7,8-tetrahydrofolate; that stretch reads SPF.

The protein belongs to the SHMT family. In terms of assembly, homodimer. It depends on pyridoxal 5'-phosphate as a cofactor.

It localises to the cytoplasm. The enzyme catalyses (6R)-5,10-methylene-5,6,7,8-tetrahydrofolate + glycine + H2O = (6S)-5,6,7,8-tetrahydrofolate + L-serine. The protein operates within one-carbon metabolism; tetrahydrofolate interconversion. It participates in amino-acid biosynthesis; glycine biosynthesis; glycine from L-serine: step 1/1. Functionally, catalyzes the reversible interconversion of serine and glycine with tetrahydrofolate (THF) serving as the one-carbon carrier. This reaction serves as the major source of one-carbon groups required for the biosynthesis of purines, thymidylate, methionine, and other important biomolecules. Also exhibits THF-independent aldolase activity toward beta-hydroxyamino acids, producing glycine and aldehydes, via a retro-aldol mechanism. This chain is Serine hydroxymethyltransferase, found in Campylobacter jejuni subsp. doylei (strain ATCC BAA-1458 / RM4099 / 269.97).